Here is a 95-residue protein sequence, read N- to C-terminus: Small ribosomal subunit protein bS16 (95 aa).

Belongs to the bacterial ribosomal protein bS16 family.

This is Small ribosomal subunit protein bS16 from Streptococcus pneumoniae (strain CGSP14).